The following is a 394-amino-acid chain: 1-deoxy-D-xylulose 5-phosphate reductoisomerase (394 aa).

8 residues coordinate NADPH: threonine 10, glycine 11, serine 12, isoleucine 13, glycine 38, arginine 39, asparagine 40, and asparagine 123. Lysine 124 serves as a coordination point for 1-deoxy-D-xylulose 5-phosphate. Residue glutamate 125 coordinates NADPH. Aspartate 149 lines the Mn(2+) pocket. Serine 150, glutamate 151, serine 175, and histidine 198 together coordinate 1-deoxy-D-xylulose 5-phosphate. Glutamate 151 lines the Mn(2+) pocket. Glycine 204 serves as a coordination point for NADPH. Serine 211, asparagine 216, lysine 217, and glutamate 220 together coordinate 1-deoxy-D-xylulose 5-phosphate. Residue glutamate 220 participates in Mn(2+) binding.

This sequence belongs to the DXR family. Mg(2+) is required as a cofactor. Mn(2+) serves as cofactor.

The enzyme catalyses 2-C-methyl-D-erythritol 4-phosphate + NADP(+) = 1-deoxy-D-xylulose 5-phosphate + NADPH + H(+). The protein operates within isoprenoid biosynthesis; isopentenyl diphosphate biosynthesis via DXP pathway; isopentenyl diphosphate from 1-deoxy-D-xylulose 5-phosphate: step 1/6. In terms of biological role, catalyzes the NADPH-dependent rearrangement and reduction of 1-deoxy-D-xylulose-5-phosphate (DXP) to 2-C-methyl-D-erythritol 4-phosphate (MEP). The polypeptide is 1-deoxy-D-xylulose 5-phosphate reductoisomerase (Cereibacter sphaeroides (strain KD131 / KCTC 12085) (Rhodobacter sphaeroides)).